A 692-amino-acid polypeptide reads, in one-letter code: Glycine--tRNA ligase beta subunit (692 aa).

The protein belongs to the class-II aminoacyl-tRNA synthetase family. As to quaternary structure, tetramer of two alpha and two beta subunits.

Its subcellular location is the cytoplasm. It carries out the reaction tRNA(Gly) + glycine + ATP = glycyl-tRNA(Gly) + AMP + diphosphate. This is Glycine--tRNA ligase beta subunit from Hahella chejuensis (strain KCTC 2396).